Here is a 301-residue protein sequence, read N- to C-terminus: Probable 2-(5''-triphosphoribosyl)-3'-dephosphocoenzyme-A synthase (301 aa).

It belongs to the CitG/MdcB family.

It carries out the reaction 3'-dephospho-CoA + ATP = 2'-(5''-triphospho-alpha-D-ribosyl)-3'-dephospho-CoA + adenine. The sequence is that of Probable 2-(5''-triphosphoribosyl)-3'-dephosphocoenzyme-A synthase from Pectobacterium carotovorum subsp. carotovorum (strain PC1).